The following is a 72-amino-acid chain: Kappa-conotoxin PVIIA (72 aa).

The N-terminal stretch at 1 to 22 (MKLTCVVIVVVLFLTACQLITA) is a signal peptide. The propeptide occupies 23-45 (DDSRRTQKHRALRSTTKLSLSTR). Disulfide bonds link cysteine 46–cysteine 61, cysteine 53–cysteine 65, and cysteine 60–cysteine 71. Proline 49 is modified (4-hydroxyproline).

It belongs to the conotoxin O1 superfamily. Post-translationally, this toxin is not amidated at the C-terminal Val residue. As to expression, expressed by the venom duct.

Its subcellular location is the secreted. Kappa-conotoxins bind and inhibit voltage-gated potassium channels (Kv). This toxin inhibits the drosophila Shaker channel (IC(50)=57-80 nM). In vivo, when tested in fish, this toxin induces hyperactivity, followed by continuous contraction and extension of major fins, without immobilization or death. Injection of this peptide together with the delta-conotoxin PVIA causes the sudden tetanus of prey (STOP) syndrome, which is a single, lethal 'fin-pop' in envenomed fish. When tested in mice, induces hyperactivity. The sequence is that of Kappa-conotoxin PVIIA from Conus purpurascens (Purple cone).